Reading from the N-terminus, the 440-residue chain is Phosphatidylglycerol--prolipoprotein diacylglyceryl transferase (440 aa).

The next 4 membrane-spanning stretches (helical) occupy residues 21–41 (VPIRAYALFIIAGIVAALLIG), 53–73 (GVIYDIALWTVPFGLVGGRLY), 96–116 (IWDGGLGIWGAVALGAVGAWI), and 122–142 (GIPLPAFADALAPGIILAQAI). Arg144 is a binding site for a 1,2-diacyl-sn-glycero-3-phospho-(1'-sn-glycerol). A run of 2 helical transmembrane segments spans residues 189–209 (VALVVQPTFLYELLWNLLIFV) and 256–276 (INSFTSTFVFIGAVVYLMAAP). Positions 280–440 (EDPESLRGNQ…ARLRDRLSGR (161 aa)) are disordered. Residues 299–330 (EPATVAATTEAATEGVAAPADGAEAAGADATA) show a composition bias toward low complexity. Positions 332–346 (RPEESAEPDVEKPES) are enriched in basic and acidic residues. Residues 347–417 (EETEAEAAEE…PEQPVAEEPE (71 aa)) show a composition bias toward acidic residues. Residues 424–440 (ETKRRWGARLRDRLSGR) show a composition bias toward basic and acidic residues.

The protein belongs to the Lgt family.

Its subcellular location is the cell membrane. It carries out the reaction L-cysteinyl-[prolipoprotein] + a 1,2-diacyl-sn-glycero-3-phospho-(1'-sn-glycerol) = an S-1,2-diacyl-sn-glyceryl-L-cysteinyl-[prolipoprotein] + sn-glycerol 1-phosphate + H(+). It participates in protein modification; lipoprotein biosynthesis (diacylglyceryl transfer). Catalyzes the transfer of the diacylglyceryl group from phosphatidylglycerol to the sulfhydryl group of the N-terminal cysteine of a prolipoprotein, the first step in the formation of mature lipoproteins. The protein is Phosphatidylglycerol--prolipoprotein diacylglyceryl transferase of Mycobacterium avium (strain 104).